Reading from the N-terminus, the 451-residue chain is Eukaryotic translation initiation factor 3 subunit E (451 aa).

Residues 256–425 (TDLFFSPAYI…GTVIMNHPPQ (170 aa)) enclose the PCI domain.

This sequence belongs to the eIF-3 subunit E family. Component of the eukaryotic translation initiation factor 3 (eIF-3) complex.

It localises to the cytoplasm. Its function is as follows. Component of the eukaryotic translation initiation factor 3 (eIF-3) complex, which is involved in protein synthesis of a specialized repertoire of mRNAs and, together with other initiation factors, stimulates binding of mRNA and methionyl-tRNAi to the 40S ribosome. The eIF-3 complex specifically targets and initiates translation of a subset of mRNAs involved in cell proliferation. The polypeptide is Eukaryotic translation initiation factor 3 subunit E (int6) (Aspergillus oryzae (strain ATCC 42149 / RIB 40) (Yellow koji mold)).